The primary structure comprises 85 residues: Probable small nuclear ribonucleoprotein G (85 aa).

Residues 6–78 (QADPDLTKLL…ILLMEPLESM (73 aa)) enclose the Sm domain.

This sequence belongs to the snRNP Sm proteins family. As to quaternary structure, core component of the spliceosomal U1, U2, U4 and U5 small nuclear ribonucleoproteins (snRNPs), the building blocks of the spliceosome. Most spliceosomal snRNPs contain a common set of Sm proteins, SNRPB, SNRPD1, SNRPD2, SNRPD3, SNRPE, SNRPF and SNRPG that assemble in a heptameric protein ring on the Sm site of the small nuclear RNA to form the core snRNP. Component of the U1 snRNP. Component of the U4/U6-U5 tri-snRNP complex. Component of the U7 snRNP complex. Component of the U11/U12 snRNPs that are part of the U12-type spliceosome.

It localises to the cytoplasm. Its subcellular location is the cytosol. The protein resides in the nucleus. Its function is as follows. Plays a role in pre-mRNA splicing as a core component of the spliceosomal U1, U2, U4 and U5 small nuclear ribonucleoproteins (snRNPs), the building blocks of the spliceosome. Component of both the pre-catalytic spliceosome B complex and activated spliceosome C complexes. Is also a component of the minor U12 spliceosome. The sequence is that of Probable small nuclear ribonucleoprotein G (snrpG) from Dictyostelium discoideum (Social amoeba).